Consider the following 156-residue polypeptide: tRNA (cytidine(34)-2'-O)-methyltransferase (156 aa).

S-adenosyl-L-methionine-binding residues include G102, L124, and S132.

Belongs to the class IV-like SAM-binding methyltransferase superfamily. RNA methyltransferase TrmH family. TrmL subfamily. Homodimer.

Its subcellular location is the cytoplasm. The enzyme catalyses cytidine(34) in tRNA + S-adenosyl-L-methionine = 2'-O-methylcytidine(34) in tRNA + S-adenosyl-L-homocysteine + H(+). It carries out the reaction 5-carboxymethylaminomethyluridine(34) in tRNA(Leu) + S-adenosyl-L-methionine = 5-carboxymethylaminomethyl-2'-O-methyluridine(34) in tRNA(Leu) + S-adenosyl-L-homocysteine + H(+). In terms of biological role, methylates the ribose at the nucleotide 34 wobble position in the two leucyl isoacceptors tRNA(Leu)(CmAA) and tRNA(Leu)(cmnm5UmAA). Catalyzes the methyl transfer from S-adenosyl-L-methionine to the 2'-OH of the wobble nucleotide. The protein is tRNA (cytidine(34)-2'-O)-methyltransferase of Burkholderia cenocepacia (strain HI2424).